The chain runs to 349 residues: DNA fragmentation factor subunit beta (349 aa).

The CIDE-N domain occupies 7–83 (QPKCVKLRAL…LLTAGETWHG (77 aa)). The segment at 319–349 (RSRIYRPQTGSRRKQPPRKQPPRKRPPRKRQ) is disordered. The segment covering 329–349 (SRRKQPPRKQPPRKRPPRKRQ) has biased composition (basic residues).

As to quaternary structure, heterodimer of DFFA and DFFB. Interacts with H1-1.

It is found in the cytoplasm. The protein localises to the nucleus. With respect to regulation, inhibited by DFFA (DFF45). Nuclease that induces DNA fragmentation and chromatin condensation during apoptosis. Degrades naked DNA and induces apoptotic morphology. This is DNA fragmentation factor subunit beta (Dffb) from Rattus norvegicus (Rat).